A 161-amino-acid chain; its full sequence is UPF0178 protein BR1979/BS1330_I1973 (161 aa).

It belongs to the UPF0178 family.

This Brucella suis biovar 1 (strain 1330) protein is UPF0178 protein BR1979/BS1330_I1973.